The chain runs to 862 residues: Protein translocase subunit SecA (862 aa).

ATP is bound by residues Gln86, 104–108, and Asp499; that span reads GEGKT. Zn(2+)-binding residues include Cys848, Cys850, Cys859, and His860.

The protein belongs to the SecA family. In terms of assembly, monomer and homodimer. Part of the essential Sec protein translocation apparatus which comprises SecA, SecYEG and auxiliary proteins SecDF-YajC and YidC. Zn(2+) serves as cofactor.

The protein localises to the cell inner membrane. Its subcellular location is the cytoplasm. The catalysed reaction is ATP + H2O + cellular proteinSide 1 = ADP + phosphate + cellular proteinSide 2.. In terms of biological role, part of the Sec protein translocase complex. Interacts with the SecYEG preprotein conducting channel. Has a central role in coupling the hydrolysis of ATP to the transfer of proteins into and across the cell membrane, serving both as a receptor for the preprotein-SecB complex and as an ATP-driven molecular motor driving the stepwise translocation of polypeptide chains across the membrane. The chain is Protein translocase subunit SecA from Ehrlichia chaffeensis (strain ATCC CRL-10679 / Arkansas).